The following is a 209-amino-acid chain: Large ribosomal subunit protein uL3 (209 aa).

The segment at 121–154 is disordered; that stretch reads GGIKRHNFHRGPMAHGSKYHRRPGSSAAKGPART.

The protein belongs to the universal ribosomal protein uL3 family. In terms of assembly, part of the 50S ribosomal subunit. Forms a cluster with proteins L14 and L19.

Its function is as follows. One of the primary rRNA binding proteins, it binds directly near the 3'-end of the 23S rRNA, where it nucleates assembly of the 50S subunit. The chain is Large ribosomal subunit protein uL3 from Desulforamulus reducens (strain ATCC BAA-1160 / DSM 100696 / MI-1) (Desulfotomaculum reducens).